Here is a 473-residue protein sequence, read N- to C-terminus: Photosystem II CP43 reaction center protein (473 aa).

A propeptide spanning residues 1-14 (MKTLYSLRRFYPVE) is cleaved from the precursor. T15 is modified (N-acetylthreonine). T15 bears the Phosphothreonine mark. 5 helical membrane passes run 69–93 (LFEV…PHLA), 134–155 (LLGP…KDRN), 178–200 (KALY…RKIT), 255–275 (KPFA…LSYS), and 291–312 (WFNN…ASQA). E367 contacts [CaMn4O5] cluster. A helical transmembrane segment spans residues 447 to 471 (RARAAAAGFEKGIDRDFEPVLSMTP).

This sequence belongs to the PsbB/PsbC family. PsbC subfamily. PSII is composed of 1 copy each of membrane proteins PsbA, PsbB, PsbC, PsbD, PsbE, PsbF, PsbH, PsbI, PsbJ, PsbK, PsbL, PsbM, PsbT, PsbX, PsbY, PsbZ, Psb30/Ycf12, at least 3 peripheral proteins of the oxygen-evolving complex and a large number of cofactors. It forms dimeric complexes. The cofactor is Binds multiple chlorophylls and provides some of the ligands for the Ca-4Mn-5O cluster of the oxygen-evolving complex. It may also provide a ligand for a Cl- that is required for oxygen evolution. PSII binds additional chlorophylls, carotenoids and specific lipids..

It is found in the plastid. The protein resides in the chloroplast thylakoid membrane. In terms of biological role, one of the components of the core complex of photosystem II (PSII). It binds chlorophyll and helps catalyze the primary light-induced photochemical processes of PSII. PSII is a light-driven water:plastoquinone oxidoreductase, using light energy to abstract electrons from H(2)O, generating O(2) and a proton gradient subsequently used for ATP formation. This Daucus carota (Wild carrot) protein is Photosystem II CP43 reaction center protein.